Consider the following 562-residue polypeptide: Solute carrier family 22 member 6 (562 aa).

The Cytoplasmic portion of the chain corresponds to 1-15 (MPFSELLEQVGSTGR). The chain crosses the membrane as a helical span at residues 16-36 (FQVLHVTLLCIPVLMMASHNL). The Extracellular portion of the chain corresponds to 37 to 147 (LQNFVATVPS…LVCDMHSFKQ (111 aa)). The chain crosses the membrane as a helical span at residues 148-168 (MGQTIYMGGVLVGALLFGGLS). Topologically, residues 169–174 (DRYGRR) are cytoplasmic. The chain crosses the membrane as a helical span at residues 175–195 (ILLLISNLLMAVSGTCAAFSS). At 196-205 (SFSLFCVFRF) the chain is on the extracellular side. Residues 206 to 226 (GCGLALSGLGLNTFSLIVEWI) form a helical membrane-spanning segment. Over 227 to 235 (PTRIRTAVG) the chain is Cytoplasmic. Residues 236–256 (TTTGYCYTLGQLILVLLAYFI) form a helical membrane-spanning segment. Residues 257-260 (RDWR) are Extracellular-facing. Residues 261–281 (WLTLAVSLPFYVFFLIAWWFH) form a helical membrane-spanning segment. Over 282–351 (ESSRWLALSN…FNTPAMRKRT (70 aa)) the chain is Cytoplasmic. Residues 352-372 (LCLSAVWLSTSFAYYGLAMDL) traverse the membrane as a helical segment. Topologically, residues 373–378 (DKFGVD) are extracellular. Residues 379 to 399 (IYLIQVIFGAVDIPAKVVVVV) form a helical membrane-spanning segment. The Cytoplasmic segment spans residues 400–408 (SMSLIGRRR). The chain crosses the membrane as a helical span at residues 409 to 429 (SQCAVLVVAGITILLNLLVPY). Residues 430 to 444 (DKQTIRTCLAVLGKG) lie on the Extracellular side of the membrane. The helical transmembrane segment at 445–465 (CLAASFNCCYLYSGELFPTII) threads the bilayer. Residues 466 to 468 (RQN) lie on the Cytoplasmic side of the membrane. The helical transmembrane segment at 469–489 (GMGWVSMMARIGAMVAPMVLL) threads the bilayer. The Extracellular segment spans residues 490-495 (TRDYIP). The chain crosses the membrane as a helical span at residues 496–516 (WLPGLIYGGAPILSGLAAIFL). Over 517-562 (PETLGYPLPDTIQDVEESGSGRKSKMSTKETITLQDKQANLLKQSA) the chain is Cytoplasmic.

It belongs to the major facilitator (TC 2.A.1) superfamily. Organic cation transporter (TC 2.A.1.19) family. Glycosylated. Glycosylation is necessary for proper targeting of the transporter to the plasma membrane.

The protein localises to the cell membrane. The protein resides in the basolateral cell membrane. Its subcellular location is the basal cell membrane. Its function is as follows. Involved in the renal elimination of endogenous and exogenous organic anions. Functions as organic anion exchanger when the uptake of one molecule of organic anion is coupled with an efflux of one molecule of endogenous dicarboxylic acid (glutarate, ketoglutarate, etc). Mediates the sodium-independent uptake of p-aminohippurate (PAH), 2,3-dimercapto-1-propanesulfonic acid (DMPS), cidofovir, adefovir, 9-(2-phosphonylmethoxyethyl) guanine (PMEG), 9-(2-phosphonylmethoxyethyl) diaminopurine (PMEDAP), ochratoxin (OTA), acyclovir (ACV), 3'-azido-3-'deoxythymidine (AZT), cimetidine (CMD), 2,4-dichloro-phenoxyacetate (2,4-D), hippurate (HA), indoleacetate (IA), indoxyl sulfate (IS), 3-carboxy-4-methyl-5-propyl-2-furanpropionate (CMPF) and edaravone sulfate. Mediates the sodium-independent uptake of p-aminohippurate (PAH). PAH uptake is inhibited by p-chloromercuribenzenesulphonate (PCMBS), diethyl pyrocarbonate (DEPC), indomethacin, sulindac, diclofenac, carprofen, okadaic acid, benzothiazolylcysteine (BTC), S-chlorotrifluoroethylcysteine (CTFC), cysteine S-conjugates S-dichlorovinylcysteine (DCVC), furosemide, steviol, phorbol 12-myristate 13-acetate (PMA), calcium ionophore A23187, benzylpenicillin, bumetamide, losartan, probenecid, phenol red, urate, glutarate and alpha-ketoglutarate. PAH uptake is inhibited by glutarate. The polypeptide is Solute carrier family 22 member 6 (SLC22A6) (Pseudopleuronectes americanus (Winter flounder)).